The following is a 262-amino-acid chain: Acyl-coenzyme A diphosphatase FITM2 (262 aa).

Topologically, residues 1–23 are cytoplasmic; it reads MEHLERCEWLLRGTLVRAAVRRY. A helical membrane pass occupies residues 24-44; sequence LPWALVASMLAGSLLKELSPL. The Lumenal segment spans residues 45–57; the sequence is PESYLSNKRNVLN. A helical transmembrane segment spans residues 58-78; the sequence is VYFVKVAWAWTFCLLLPFIAL. Residues 79–93 are Cytoplasmic-facing; that stretch reads TNYHLTGKAGLVLRR. The helical transmembrane segment at 94–114 threads the bilayer; the sequence is LSTLLVGTAIWYICTSIFSNI. Residues 115–145 lie on the Lumenal side of the membrane; it reads EHYTGSCYQSPALEGVRKEHQSKQQCHQEGG. Residues 146 to 166 form a helical membrane-spanning segment; that stretch reads FWHGFDISGHSFLLTFCALMI. The active site involves H155. Over 167–190 the chain is Cytoplasmic; it reads VEEMSVLHEVKTDRSHCLHTAITT. A helical transmembrane segment spans residues 191 to 211; it reads LVVALGILTFIWVLMFLCTAV. At 212 to 218 the chain is on the lumenal side; it reads YFHNLSQ. The active site involves H214. Residues 219-239 traverse the membrane as a helical segment; sequence KVFGTLFGLLSWYGTYGFWYP. Residues 240–262 lie on the Cytoplasmic side of the membrane; it reads KAFSPGLPPQSCSLNLKQDSYKK.

It belongs to the FIT family. FIT2 subfamily. In terms of tissue distribution, widely expressed.

It is found in the endoplasmic reticulum membrane. The catalysed reaction is an acyl-CoA + H2O = an acyl-4'-phosphopantetheine + adenosine 3',5'-bisphosphate + 2 H(+). It catalyses the reaction (9Z)-octadecenoyl-CoA + H2O = S-(9Z-octadecenoyl)-4'-phosphopantetheine + adenosine 3',5'-bisphosphate + 2 H(+). The enzyme catalyses (5Z,8Z,11Z,14Z)-eicosatetraenoyl-CoA + H2O = S-(5Z,8Z,11Z,14Z-eicosatetraenoyl)-4'-phosphopantetheine + adenosine 3',5'-bisphosphate + 2 H(+). It carries out the reaction hexadecanoyl-CoA + H2O = S-hexadecanoyl-4'-phosphopantetheine + adenosine 3',5'-bisphosphate + 2 H(+). Its function is as follows. Fatty acyl-coenzyme A (CoA) diphosphatase that hydrolyzes fatty acyl-CoA to yield acyl-4'-phosphopantetheine and adenosine 3',5'-bisphosphate. Preferentially hydrolyzes unsaturated long-chain acyl-CoA substrates such as oleoyl-CoA/(9Z)-octadecenoyl-CoA and arachidonoyl-CoA/(5Z,8Z,11Z,14Z)-eicosatetraenoyl-CoA in the endoplasmic reticulum (ER) lumen. This catalytic activity is required for maintaining ER structure and for lipid droplets (LDs) biogenesis, which are lipid storage organelles involved in maintaining lipid and energy homeostasis. Directly binds to diacylglycerol (DAGs) and triacylglycerol, which is also important for LD biogenesis. May support directional budding of nacent LDs from the ER into the cytosol by reducing DAG levels at sites of LD formation. Plays a role in the regulation of cell morphology and cytoskeletal organization. This chain is Acyl-coenzyme A diphosphatase FITM2, found in Homo sapiens (Human).